Consider the following 311-residue polypeptide: Pyrimidine-specific ribonucleoside hydrolase RihA (311 aa).

Histidine 240 is an active-site residue.

It belongs to the IUNH family. RihA subfamily.

Hydrolyzes with equal efficiency cytidine or uridine to ribose and cytosine or uracil, respectively. The sequence is that of Pyrimidine-specific ribonucleoside hydrolase RihA from Escherichia coli O17:K52:H18 (strain UMN026 / ExPEC).